A 155-amino-acid polypeptide reads, in one-letter code: UPF0178 protein Gmet_1725 (155 aa).

This sequence belongs to the UPF0178 family.

The polypeptide is UPF0178 protein Gmet_1725 (Geobacter metallireducens (strain ATCC 53774 / DSM 7210 / GS-15)).